The following is a 610-amino-acid chain: Dopamine beta-hydroxylase (610 aa).

The Cytoplasmic portion of the chain corresponds to 1-9; it reads MKVPSPSVR. The helical; Signal-anchor for type II membrane protein transmembrane segment at 10-30 threads the bilayer; that stretch reads EAASMYGTAVAIFLVILVAAL. Residues 31–610 are Intragranular-facing; it reads QGSEPPESPF…TVVDIGGGKG (580 aa). The DOMON domain occupies 50–166; sequence GTLELSWNVS…GTVHLVYGIL (117 aa). N57, N177, and N194 each carry an N-linked (GlcNAc...) asparagine glycan. 6 disulfide bridges follow: C147–C589, C225–C276, C262–C288, C383–C496, C387–C558, and C459–C481. Residue Y223 is part of the active site. H255 and H256 together coordinate Cu(2+). H326, H405, H407, and M480 together coordinate Cu(2+). Residue H405 is part of the active site. Positions 586 to 610 are disordered; it reads TPRCPASRGRSPAGPTVVDIGGGKG.

The protein belongs to the copper type II ascorbate-dependent monooxygenase family. In terms of assembly, homotetramer; composed of two disulfide-linked dimers. Cu(2+) serves as cofactor. In terms of processing, proteolytic cleavage after the membrane-anchor leads to the release of the soluble form. N-glycosylated. Detected in adrenal medulla chromaffin cells.

The protein localises to the cytoplasmic vesicle. The protein resides in the secretory vesicle lumen. Its subcellular location is the secretory vesicle. It localises to the chromaffin granule lumen. It is found in the secreted. The protein localises to the secretory vesicle membrane. The protein resides in the chromaffin granule membrane. The catalysed reaction is dopamine + 2 L-ascorbate + O2 = (R)-noradrenaline + 2 monodehydro-L-ascorbate radical + H2O. It functions in the pathway catecholamine biosynthesis; (R)-noradrenaline biosynthesis; (R)-noradrenaline from dopamine: step 1/1. Its function is as follows. Catalyzes the hydroxylation of dopamine to noradrenaline (also known as norepinephrine), and is thus vital for regulation of these neurotransmitters. This chain is Dopamine beta-hydroxylase (DBH), found in Equus caballus (Horse).